We begin with the raw amino-acid sequence, 374 residues long: Chaperone protein DnaJ (374 aa).

One can recognise a J domain in the interval 6–70 (DYYDILGVSK…QKRAQYDQFG (65 aa)). A CR-type zinc finger spans residues 135–217 (GKKTTIKYSR…CGGTGHTSQQ (83 aa)). Positions 148, 151, 165, 168, 191, 194, 205, and 208 each coordinate Zn(2+). 4 CXXCXGXG motif repeats span residues 148–155 (CKTCGGSG), 165–172 (CHKCNGTG), 191–198 (CDVCNGTG), and 205–212 (CPTCGGTG). Disordered stretches follow at residues 308–328 (GTNFRLKGKGAPRLRGNGTGD) and 347–374 (EALKQFAKASGEEPSGHGKSGFFDKFMN).

This sequence belongs to the DnaJ family. As to quaternary structure, homodimer. Zn(2+) serves as cofactor.

Its subcellular location is the cytoplasm. Participates actively in the response to hyperosmotic and heat shock by preventing the aggregation of stress-denatured proteins and by disaggregating proteins, also in an autonomous, DnaK-independent fashion. Unfolded proteins bind initially to DnaJ; upon interaction with the DnaJ-bound protein, DnaK hydrolyzes its bound ATP, resulting in the formation of a stable complex. GrpE releases ADP from DnaK; ATP binding to DnaK triggers the release of the substrate protein, thus completing the reaction cycle. Several rounds of ATP-dependent interactions between DnaJ, DnaK and GrpE are required for fully efficient folding. Also involved, together with DnaK and GrpE, in the DNA replication of plasmids through activation of initiation proteins. In Pediococcus pentosaceus (strain ATCC 25745 / CCUG 21536 / LMG 10740 / 183-1w), this protein is Chaperone protein DnaJ.